The chain runs to 233 residues: Archaetidylserine synthase (233 aa).

The next 8 membrane-spanning stretches (helical) occupy residues I7–L27, I29–L49, S75–V95, I102–L122, G126–L146, T147–I167, A180–L200, and V206–I226.

Belongs to the CDP-alcohol phosphatidyltransferase class-I family.

The protein resides in the membrane. The catalysed reaction is CDP-2,3-bis-O-(geranylgeranyl)-sn-glycerol + L-serine = archaetidylserine + CMP + H(+). The enzyme catalyses CDP-2,3-bis-O-(phytanyl)-sn-glycerol + L-serine = 2,3-bis-O-phytanyl-sn-glycero-3-phospho-L-serine + CMP + H(+). The protein operates within membrane lipid metabolism; glycerophospholipid metabolism. With respect to regulation, activated by Mn(2+) ions. Its function is as follows. Involved in the lipid biosynthesis. Catalyzes the formation of unsaturated archaetidylserine from CDP-unsaturated archaeol and L-serine. Activity with ester-linked substrate analogs containing straight aliphatic chains (typical bacterial substrates) is two to three times higher than that with the corresponding ether-type substrate (typical archaeal substrates). Both enantiomers of CDP-unsaturated archaeols with ether-linked geranylgeranyl chains and CDP-saturated archaeol with ether-linked phytanyl chains are similarly active. The enzyme also accepts D-serine, although activity is only about third of that with L-serine. The chain is Archaetidylserine synthase from Methanothermobacter thermautotrophicus (strain ATCC 29096 / DSM 1053 / JCM 10044 / NBRC 100330 / Delta H) (Methanobacterium thermoautotrophicum).